Here is a 208-residue protein sequence, read N- to C-terminus: MIVIIDYDTGNTKSISKALDFIGLQNKISSDATEISQADGVILPGVGAYPEAMKELTRRGLDKTLKEIAATGKPILGVCLGMQLLLESSNEHSFTSGLGLIPGHVEKLPEEPEFAVPHMGWNQLQIKRATPLTKQLDGEYVYYVHSYYANCPEEYIIATSGYSIEVPGMINNGNIYGAQFHPEKSGQIGLEILKGFKEVTYSCKSSQQ.

The 206-residue stretch at 1 to 206 (MIVIIDYDTG…KEVTYSCKSS (206 aa)) folds into the Glutamine amidotransferase type-1 domain. The active-site Nucleophile is the cysteine 79. Active-site residues include histidine 181 and glutamate 183.

As to quaternary structure, heterodimer of HisH and HisF.

It localises to the cytoplasm. It catalyses the reaction 5-[(5-phospho-1-deoxy-D-ribulos-1-ylimino)methylamino]-1-(5-phospho-beta-D-ribosyl)imidazole-4-carboxamide + L-glutamine = D-erythro-1-(imidazol-4-yl)glycerol 3-phosphate + 5-amino-1-(5-phospho-beta-D-ribosyl)imidazole-4-carboxamide + L-glutamate + H(+). It carries out the reaction L-glutamine + H2O = L-glutamate + NH4(+). It participates in amino-acid biosynthesis; L-histidine biosynthesis; L-histidine from 5-phospho-alpha-D-ribose 1-diphosphate: step 5/9. IGPS catalyzes the conversion of PRFAR and glutamine to IGP, AICAR and glutamate. The HisH subunit catalyzes the hydrolysis of glutamine to glutamate and ammonia as part of the synthesis of IGP and AICAR. The resulting ammonia molecule is channeled to the active site of HisF. In Listeria monocytogenes serotype 4a (strain HCC23), this protein is Imidazole glycerol phosphate synthase subunit HisH.